A 253-amino-acid chain; its full sequence is Imidazole glycerol phosphate synthase subunit HisF (253 aa).

Catalysis depends on residues Asp11 and Asp130.

This sequence belongs to the HisA/HisF family. In terms of assembly, heterodimer of HisH and HisF.

The protein localises to the cytoplasm. It carries out the reaction 5-[(5-phospho-1-deoxy-D-ribulos-1-ylimino)methylamino]-1-(5-phospho-beta-D-ribosyl)imidazole-4-carboxamide + L-glutamine = D-erythro-1-(imidazol-4-yl)glycerol 3-phosphate + 5-amino-1-(5-phospho-beta-D-ribosyl)imidazole-4-carboxamide + L-glutamate + H(+). It participates in amino-acid biosynthesis; L-histidine biosynthesis; L-histidine from 5-phospho-alpha-D-ribose 1-diphosphate: step 5/9. Its function is as follows. IGPS catalyzes the conversion of PRFAR and glutamine to IGP, AICAR and glutamate. The HisF subunit catalyzes the cyclization activity that produces IGP and AICAR from PRFAR using the ammonia provided by the HisH subunit. This Opitutus terrae (strain DSM 11246 / JCM 15787 / PB90-1) protein is Imidazole glycerol phosphate synthase subunit HisF.